The primary structure comprises 136 residues: MARTKQTARKSTGGKAPRKQLATKAARKSAPAAGGVKKPHRYKPGTVALREIRRYQKSTELLIRKLPFQRLVREIAQDFKTDLRFQSSAIGALQEAAEAYLVSLFEDTNLAAIHAKRVTIQPKDIALARRLRGERS.

Positions 1 to 41 are disordered; the sequence is MARTKQTARKSTGGKAPRKQLATKAARKSAPAAGGVKKPHR. K5 bears the N6,N6,N6-trimethyllysine; alternate mark. K5 carries the N6,N6-dimethyllysine; alternate modification. N6-methyllysine; alternate occurs at positions 5 and 10. At K10 the chain carries N6-acetyllysine; alternate. Residue S11 is modified to Phosphoserine. K15 is subject to N6,N6-dimethyllysine; alternate. N6-acetyllysine; alternate occurs at positions 15, 19, 24, 28, and 37. 4 positions are modified to N6-methyllysine; alternate: K19, K24, K28, and K37. Residues 22 to 33 show a composition bias toward low complexity; it reads ATKAARKSAPAA. 2 positions are modified to N6,N6,N6-trimethyllysine; alternate: K28 and K37. K28 and K37 each carry N6,N6-dimethyllysine; alternate. Residues K57 and K65 each carry the N6-acetyllysine modification. At K80 the chain carries N6,N6,N6-trimethyllysine; alternate. At K80 the chain carries N6,N6-dimethyllysine; alternate. At K80 the chain carries N6-methyllysine; alternate.

The protein belongs to the histone H3 family. The nucleosome is a histone octamer containing two molecules each of H2A, H2B, H3 and H4 assembled in one H3-H4 heterotetramer and two H2A-H2B heterodimers. The octamer wraps approximately 147 bp of DNA. Phosphorylated to form H3S10ph. H3S10ph promotes subsequent H3K14ac formation and is required for transcriptional activation through TBP recruitment to the promoters. In terms of processing, mono-, di- and trimethylated by the COMPASS complex to form H3K4me1/2/3. H3K4me activates gene expression by regulating transcription elongation and plays a role in telomere length maintenance. H3K4me enrichment correlates with transcription levels, and occurs in a 5' to 3' gradient with H3K4me3 enrichment at the 5'-end of genes, shifting to H3K4me2 and then H3K4me1. Methylated by SET2 to form H3K36me. H3K36me represses gene expression. Methylated by DOT1 to form H3K79me. H3K79me is required for association of SIR proteins with telomeric regions and for telomeric silencing. The COMPASS-mediated formation of H3K4me2/3 and the DOT1-mediated formation of H3K79me require H2BK123ub1. Post-translationally, acetylation of histone H3 leads to transcriptional activation. H3K14ac formation by GCN5 is promoted by H3S10ph. H3K14ac can also be formed by ESA1. H3K56ac formation occurs predominantly in newly synthesized H3 molecules during G1, S and G2/M of the cell cycle and may be involved in DNA repair.

The protein resides in the nucleus. The protein localises to the chromosome. Functionally, core component of nucleosome. Nucleosomes wrap and compact DNA into chromatin, limiting DNA accessibility to the cellular machineries which require DNA as a template. Histones thereby play a central role in transcription regulation, DNA repair, DNA replication and chromosomal stability. DNA accessibility is regulated via a complex set of post-translational modifications of histones, also called histone code, and nucleosome remodeling. This is Histone H3.1 (HHT1) from Mycosarcoma maydis (Corn smut fungus).